A 427-amino-acid polypeptide reads, in one-letter code: Tol-Pal system protein TolB (427 aa).

Residues 1-27 (MPVSLLRALLVFSLLCLGLSATRAAHA) form the signal peptide.

It belongs to the TolB family. The Tol-Pal system is composed of five core proteins: the inner membrane proteins TolA, TolQ and TolR, the periplasmic protein TolB and the outer membrane protein Pal. They form a network linking the inner and outer membranes and the peptidoglycan layer.

The protein localises to the periplasm. Functionally, part of the Tol-Pal system, which plays a role in outer membrane invagination during cell division and is important for maintaining outer membrane integrity. The protein is Tol-Pal system protein TolB of Thiobacillus denitrificans (strain ATCC 25259 / T1).